We begin with the raw amino-acid sequence, 463 residues long: Probable glycosyltransferase 3 (463 aa).

Over 1–24 (MAVTGGGRPAVRQQAARGKQMQRT) the chain is Cytoplasmic. Residues 25–47 (FNNVKITLICGFITLLVLRGTVG) form a helical; Signal-anchor for type II membrane protein membrane-spanning segment. At 48–463 (INLLTYGVGG…ALKMDAKIES (416 aa)) the chain is on the lumenal side. The interval 82-125 (EIRSDTDDDDDDEEEEPLGVDASTTTTTNSTTTTATAARRRSSN) is disordered. Residues 87 to 99 (TDDDDDDEEEEPL) show a composition bias toward acidic residues. Over residues 103-118 (ASTTTTTNSTTTTATA) the composition is skewed to low complexity. N-linked (GlcNAc...) asparagine glycosylation is found at Asn-110, Asn-125, and Asn-442.

The protein belongs to the glycosyltransferase 34 family.

The protein resides in the golgi apparatus membrane. Its function is as follows. Probable glycosyltransferase that may be involved in the biosynthesis of xyloglucan. This Oryza sativa subsp. japonica (Rice) protein is Probable glycosyltransferase 3.